Consider the following 527-residue polypeptide: uncharacterized protein (527 aa).

The PE domain maps to 1 to 93 (MSYMIAVPDM…AGAYASAEAT (93 aa)). Gly residues-rich tracts occupy residues 264-286 (IHGHGGVGGDGGTGGQGGDGVQG), 292-384 (GAAG…AGNG), and 472-515 (NGGD…GGSR). 2 disordered regions span residues 264-384 (IHGH…AGNG) and 472-527 (NGGD…TPGQ).

It belongs to the mycobacterial PE family. PGRS subfamily.

This is an uncharacterized protein from Mycobacterium tuberculosis (strain CDC 1551 / Oshkosh).